We begin with the raw amino-acid sequence, 350 residues long: Ion-translocating oxidoreductase complex subunit D (350 aa).

Helical transmembrane passes span 20 to 39 (IMML…WYFF), 89 to 109 (IPPL…VIIA), and 123 to 143 (PAMI…TNWL). T187 carries the FMN phosphoryl threonine modification. Helical transmembrane passes span 215–235 (LAGL…LFLL), 244–264 (IPVS…LIAP), 267–287 (FLSP…FFIL), 301–321 (LVFG…GGYP), and 322–342 (DGVA…DYYT).

It belongs to the NqrB/RnfD family. In terms of assembly, the complex is composed of six subunits: RnfA, RnfB, RnfC, RnfD, RnfE and RnfG. FMN is required as a cofactor.

The protein localises to the cell inner membrane. Its function is as follows. Part of a membrane-bound complex that couples electron transfer with translocation of ions across the membrane. This chain is Ion-translocating oxidoreductase complex subunit D, found in Cronobacter sakazakii (strain ATCC BAA-894) (Enterobacter sakazakii).